A 341-amino-acid polypeptide reads, in one-letter code: MKVKDFDFYLPEELIAQHPMEKRDEARLLVLDKKTGGIEHKIFKDILDYLTPNDCLVLNNTRVLPARLIGAKEETGGKMEFLLLKRKEKDVWETLVKPGKRAQIGARFIFGNGELKAEVIGMGEEGSRIVKFYYEGIFEEILDQLGQMPLPPYIKEKLDDKEMYQTVYSKEEGSAAAPTAGLHFTEELLKKIKEKGVKLAFLTLHVGLGTFRPVKVENIQEHVMHSEYYKMDKETAEIINDTKEKGGRVIAVGTTSCRTLETIGDIEGKVREQSGWTDIFIYPGYKYKVVDALITNFHLPQSTLLMLVSALAGRDNIMNAYNVAVEKEYRFFSFGDAMFIK.

Belongs to the QueA family. In terms of assembly, monomer.

Its subcellular location is the cytoplasm. The catalysed reaction is 7-aminomethyl-7-carbaguanosine(34) in tRNA + S-adenosyl-L-methionine = epoxyqueuosine(34) in tRNA + adenine + L-methionine + 2 H(+). It functions in the pathway tRNA modification; tRNA-queuosine biosynthesis. In terms of biological role, transfers and isomerizes the ribose moiety from AdoMet to the 7-aminomethyl group of 7-deazaguanine (preQ1-tRNA) to give epoxyqueuosine (oQ-tRNA). The protein is S-adenosylmethionine:tRNA ribosyltransferase-isomerase of Clostridium botulinum (strain Kyoto / Type A2).